A 132-amino-acid polypeptide reads, in one-letter code: Small ribosomal subunit protein uS8 (132 aa).

The protein belongs to the universal ribosomal protein uS8 family. Part of the 30S ribosomal subunit. Contacts proteins S5 and S12.

Functionally, one of the primary rRNA binding proteins, it binds directly to 16S rRNA central domain where it helps coordinate assembly of the platform of the 30S subunit. The chain is Small ribosomal subunit protein uS8 from Halothermothrix orenii (strain H 168 / OCM 544 / DSM 9562).